A 178-amino-acid polypeptide reads, in one-letter code: Ribosome maturation factor RimM (178 aa).

Residues 98-178 enclose the PRC barrel domain; that stretch reads DGEYYWNQLE…RILVDWDPEF (81 aa).

Belongs to the RimM family. In terms of assembly, binds ribosomal protein uS19.

The protein localises to the cytoplasm. Functionally, an accessory protein needed during the final step in the assembly of 30S ribosomal subunit, possibly for assembly of the head region. Essential for efficient processing of 16S rRNA. May be needed both before and after RbfA during the maturation of 16S rRNA. It has affinity for free ribosomal 30S subunits but not for 70S ribosomes. The chain is Ribosome maturation factor RimM from Cellvibrio japonicus (strain Ueda107) (Pseudomonas fluorescens subsp. cellulosa).